A 370-amino-acid chain; its full sequence is Alpha-(1,3)-fucosyltransferase 7 (370 aa).

Over 1-36 the chain is Cytoplasmic; the sequence is MVQGCLCWRGCCDLKTSFPWVTNSRRLWMNCIGCNP. A helical; Signal-anchor for type II membrane protein transmembrane segment spans residues 37–59; it reads VWRLRAWGCLAGGTTLMVIWLFW. The Lumenal segment spans residues 60–370; sequence LLRSVPGGAP…YEDLESWFQA (311 aa). An N-linked (GlcNAc...) asparagine glycan is attached at asparagine 86. A disulfide bridge connects residues cysteine 96 and cysteine 104. Residue asparagine 109 is glycosylated (N-linked (GlcNAc...) asparagine). Cysteines 239 and 242 form a disulfide. N-linked (GlcNAc...) asparagine glycosylation occurs at asparagine 319. Cysteine 346 and cysteine 349 are oxidised to a cystine.

The protein belongs to the glycosyltransferase 10 family. N-glycosylated. In terms of tissue distribution, expressed in lymph node and kidney.

It localises to the golgi apparatus. The protein localises to the golgi stack membrane. The catalysed reaction is an N-acetyl-alpha-neuraminyl-(2-&gt;3)-beta-D-galactosyl-(1-&gt;4)-N-acetyl-beta-D-glucosaminyl derivative + GDP-beta-L-fucose = an alpha-Neu5Ac-(2-&gt;3)-beta-D-Gal-(1-&gt;4)-[alpha-L-Fuc-(1-&gt;3)]-beta-D-GlcNAc derivative + GDP + H(+). It catalyses the reaction a neolactoside IV(3)-alpha-NeuAc-nLc4Cer + GDP-beta-L-fucose = a neolactoside IV(3)-alpha-NeuNAc,III(3)-alpha-Fuc-nLc4Cer + GDP + H(+). The enzyme catalyses a neolactoside VI(3)-alpha-NeuNAc-nLc6Cer + GDP-beta-L-fucose = a neolactoside VI(3)-alpha-NeuAc,V(3)-alphaFuc-nLc6Cer + GDP + H(+). It carries out the reaction an alpha-Neu5Ac-(2-&gt;3)-beta-D-Gal-(1-&gt;4)-beta-D-GlcNAc-(1-&gt;3)-beta-D-Gal-(1-&gt;4)-[alpha-L-Fuc-(1-&gt;3)]-beta-D-GlcNAc derivative + GDP-beta-L-fucose = an alpha-Neu5Ac-(2-&gt;3)-beta-D-Gal-(1-&gt;4)-[alpha-L-Fuc-(1-&gt;3)]-beta-D-GlcNAc-(1-&gt;3)-beta-D-Gal-(1-&gt;4)-[alpha-L-Fuc-(1-&gt;3)]-beta-D-GlcNAc derivative + GDP + H(+). The catalysed reaction is an alpha-Neu5Ac-(2-&gt;3)-beta-D-Gal-(1-&gt;4)-beta-D-GlcNAc6S derivative + GDP-beta-L-fucose = an alpha-Neu5Ac-(2-&gt;3)-beta-D-Gal-(1-&gt;4)-[alpha-L-Fuc-(1-&gt;3)]-beta-D-GlcNAc6S derivative + GDP + H(+). It catalyses the reaction alpha-Neu5Ac-(2-&gt;3)-beta-D-Gal-(1-&gt;4)-beta-D-GlcNAc-(1-&gt;3)-beta-D-Gal-(1-&gt;4)-D-Glc + GDP-beta-L-fucose = alpha-Neu5Ac-(2-&gt;3)-beta-D-Gal-(1-&gt;4)-[alpha-L-Fuc-(1-&gt;3)]-beta-D-GlcNAc-(1-&gt;3)-beta-D-Gal-(1-&gt;4)-D-Glc + GDP + H(+). The enzyme catalyses alpha-Neu5Ac-(2-&gt;3)-beta-D-Gal-(1-&gt;4)-beta-D-GlcNAc-(1-&gt;3)-beta-D-Gal-(1-&gt;4)-[alpha-L-Fuc-(1-&gt;3)]-beta-D-GlcNAc-(1-&gt;3)-beta-D-Gal-(1-&gt;4)-beta-D-GlcNAc + GDP-beta-L-fucose = alpha-Neu5Ac-(2-&gt;3)-beta-D-Gal-(1-&gt;4)-[alpha-L-Fuc-(1-&gt;3)]-beta-D-GlcNAc-(1-&gt;3)-beta-D-Gal-(1-&gt;4)-[alpha-L-Fuc-(1-&gt;3)]-beta-D-GlcNAc-(1-&gt;3)-beta-D-Gal-(1-&gt;4)-beta-D-GlcNAc + GDP + H(+). It carries out the reaction alpha-Neu5Ac-(2-&gt;3)-beta-D-Gal-(1-&gt;4)-beta-D-GlcNAc-(1-&gt;3)-beta-D-Gal-(1-&gt;4)-beta-D-GlcNAc-(1-&gt;3)-beta-D-Gal-(1-&gt;4)-beta-D-GlcNAc + GDP-beta-L-fucose = alpha-Neu5Ac-(2-&gt;3)-beta-D-Gal-(1-&gt;4)-[alpha-L-Fuc-(1-&gt;3)]-beta-D-GlcNAc-(1-&gt;3)-beta-D-Gal-(1-&gt;4)-beta-D-GlcNAc-(1-&gt;3)-beta-D-Gal-(1-&gt;4)-beta-D-GlcNAc + GDP + H(+). Its pathway is protein modification; protein glycosylation. Its activity is regulated as follows. Inhibited by NaCl. Inhibited by GDP in a concentration dependent manner, with an IC(50) value of 93 uM. Also inhibited by GMP and GTP. Inhibited by N-ethylmaleimide. Activated by poly(ethylene glycol) by enhancing the thermal stability of FUT7. Activated by Mn2+, Ca2+, and Mg2+. Both panosialin A and B inhibit activity with IC(50) values of 4.8 and 5.3 ug/ml, respectively. Inhibited by gallic acid (GA) and (-)-epigallocatechin gallate (EGCG) in a time-dependent and irreversible manner with IC(50) values of 60 and 700 nM, respectively. Catalyzes the transfer of L-fucose, from a guanosine diphosphate-beta-L-fucose, to the N-acetyl glucosamine (GlcNAc) of a distal alpha2,3 sialylated lactosamine unit of a glycoprotein or a glycolipid-linked sialopolylactosamines chain through an alpha-1,3 glycosidic linkage and participates in the final fucosylation step in the biosynthesis of the sialyl Lewis X (sLe(x)), a carbohydrate involved in cell and matrix adhesion during leukocyte trafficking and fertilization. In vitro, also synthesizes sialyl-dimeric-Lex structures, from VIM-2 structures and both di-fucosylated and trifucosylated structures from mono-fucosylated precursors. However does not catalyze alpha 1-3 fucosylation when an internal alpha 1-3 fucosylation is present in polylactosamine chain and the fucosylation rate of the internal GlcNAc residues is reduced once fucose has been added to the distal GlcNAc. Also catalyzes the transfer of a fucose from GDP-beta-fucose to the 6-sulfated a(2,3)sialylated substrate to produce 6-sulfo sLex mediating significant L-selectin-dependent cell adhesion. Through sialyl-Lewis(x) biosynthesis, can control SELE- and SELP-mediated cell adhesion with leukocytes and allows leukocytes tethering and rolling along the endothelial tissue thereby enabling the leukocytes to accumulate at a site of inflammation. May enhance embryo implantation through sialyl Lewis X (sLeX)-mediated adhesion of embryo cells to endometrium. May affect insulin signaling by up-regulating the phosphorylation and expression of some signaling molecules involved in the insulin-signaling pathway through SLe(x) which is present on the glycans of the INSRR alpha subunit. This is Alpha-(1,3)-fucosyltransferase 7 from Rattus norvegicus (Rat).